The sequence spans 258 residues: Phosphonates import ATP-binding protein PhnC 3 (258 aa).

The region spanning 2 to 246 (IEFKNVSLVY…TFEEIYGRKI (245 aa)) is the ABC transporter domain. ATP is bound at residue 35 to 42 (GLSGAGKS).

It belongs to the ABC transporter superfamily. Phosphonates importer (TC 3.A.1.9.1) family. The complex is composed of two ATP-binding proteins (PhnC), two transmembrane proteins (PhnE) and a solute-binding protein (PhnD).

It is found in the cell membrane. The catalysed reaction is phosphonate(out) + ATP + H2O = phosphonate(in) + ADP + phosphate + H(+). Functionally, part of the ABC transporter complex PhnCDE involved in phosphonates import. Responsible for energy coupling to the transport system. The polypeptide is Phosphonates import ATP-binding protein PhnC 3 (Halalkalibacterium halodurans (strain ATCC BAA-125 / DSM 18197 / FERM 7344 / JCM 9153 / C-125) (Bacillus halodurans)).